A 615-amino-acid polypeptide reads, in one-letter code: 70 kDa neurofilament protein (615 aa).

The segment at 1 to 31 (MSVTQKKTEISTTTTYEGESRPSSGMSGFSY) is disordered. The tract at residues 1-99 (MSVTQKKTEI…KANREREKQD (99 aa)) is head. The span at 21-30 (RPSSGMSGFS) shows a compositional bias: polar residues. The region spanning 96 to 449 (EKQDMRDLNE…KLLEGEESRV (354 aa)) is the IF rod domain. The coil 1A stretch occupies residues 100-135 (MRDLNERFANYIEKVRFLEAQNKKLAGELEELKSKW). The interval 136–145 (GKETSAIKEM) is linker 1. Residues 146 to 284 (YETELEEARK…VHAQELKELA (139 aa)) form a coil 1B region. The linker 12 stretch occupies residues 285 to 303 (ALAYRDTTAENREFWRNEL). A coil 2 region spans residues 304-449 (AQAIRDIQQE…KLLEGEESRV (146 aa)). The tract at residues 450 to 615 (GMKQIVEQVV…ANYTQNTVYQ (166 aa)) is tail. The LTD domain maps to 499–612 (AKTTYQRTSK…EDKANYTQNT (114 aa)).

This sequence belongs to the intermediate filament family.

In Doryteuthis pealeii (Longfin inshore squid), this protein is 70 kDa neurofilament protein.